The sequence spans 1227 residues: MDLEAKEISGNIPNENALAELCRLCESADLSQIENFVGRYKNWCLSIIWPRNCWLRFTPRKDVAGYTEKMFEDMDDHYQGFVEKLCLLGTIQIPYRDVPILIGRSKRIFLHDLETDTLHFVCDNFEQFVRYGVLGTNIITCAEPVYRHGLYEGPRFESLENLMNNDVLRSPYTLNVHVKLNRKGVLGIKAMRKHYIAMLREFDELARCASLDDVGRFVSLNVGRDLRLDMPVFKSLTLGTRDSVWTGTCRLANLKEQEDLVEKVVVLGYLNDHDYESKCTRPILCIGKSGKIYYYDWIDNVLVKLGDCLLTFLRVGFARLFADYGYEKIGKISMRFGRMSTLGMSETYQSCMSLKIVPVCNDEFALSSCVPTLDFDVDVLSAAYGDGLEISSPGLRCCIAWPPMYALTLGEFYHFHTHRWVSAYDWSSLLDADEFMSAVGYAHPIYRDPNPDYDPYVMHTSTGKTIAVDTVTEKVYIIAESLVQFFNIGLRQFPPFAEAELDPEQEKMWFGETKCGREEFILLQRNLPAMKDYVAKHSGKRIRVDAFQDFDFSFCSLSDIYYLTGPGILEKITEKDYAIIGTCARSQAEPNCRAAIVMGSNCHIYIYVENKISKVSKSLRTFIRRGFDELLYKEKYSLDWSDDTLFYISDTETENLNRMLNGELPVLRSKPRHMCVRKDRLVKDRSKILFAVRLDEEDSPTVKFITKFLTPVFVGRLPATNRFVVPVSRARLTNGLQGTAAARFGIKGLHPSSDCLVWNILVDYEYETYKYPSTYIRADQIADMVKDLKFMDNFNEKWQCITKLAFLGLYAGASLFNFTSKPTLGYWCRYLSEYASMLLFQFESKLKELTKESTRQLGGYNLCHWGQELKDCLENKSDVFFRYDFFERIESCLIEHFMLLCGCVECRRMFIMYNKRGRKFDFGHSVRIQCFPMIGSIRLPAFLHLGEPYDVSLSSLIAKDLGLSMIEGQIELSRLPISLQISVTPDKKALLTFLTNIVFIVFVVNTLYRVINAELDIYYDLFTEEVGKLCVAMEEEMKLGRNGCLGDLCYFSPMKQMKEIVRCPGEKSQFILKCWEALRIGFSVPAYKDYDETPFMEMFFMHHLHIKRFHEDNDRDLVSCDNLIPGFFIVNTDGENFLQRLQRVVLPVVEDYLTNTRCINGTMAFFFSGLKYFGSGNHRGFQISPEKDVRAIAYKLGSLDVLRDDYKYYEYTPPDCPGELNGHGGDE.

This sequence belongs to the herpesviridae US22 family.

The polypeptide is Protein U7 (U7/U5) (Homo sapiens (Human)).